The primary structure comprises 312 residues: Protoheme IX farnesyltransferase (312 aa).

The next 8 helical transmembrane spans lie at 34–54 (LVIF…HPVL), 56–76 (ITSL…NMAL), 119–139 (ILVN…YVVI), 152–172 (IVIG…AATG), 179–199 (LLLF…LALF), 225–245 (ILLY…LGYF), 248–268 (VYGV…IEVF), and 283–303 (LFAF…LEAV).

It belongs to the UbiA prenyltransferase family. Protoheme IX farnesyltransferase subfamily.

The protein resides in the cell inner membrane. The catalysed reaction is heme b + (2E,6E)-farnesyl diphosphate + H2O = Fe(II)-heme o + diphosphate. It participates in porphyrin-containing compound metabolism; heme O biosynthesis; heme O from protoheme: step 1/1. Its function is as follows. Converts heme B (protoheme IX) to heme O by substitution of the vinyl group on carbon 2 of heme B porphyrin ring with a hydroxyethyl farnesyl side group. The polypeptide is Protoheme IX farnesyltransferase (Bradyrhizobium sp. (strain BTAi1 / ATCC BAA-1182)).